Reading from the N-terminus, the 223-residue chain is GTP cyclohydrolase 1 (223 aa).

Zn(2+) contacts are provided by cysteine 114, histidine 117, and cysteine 185.

It belongs to the GTP cyclohydrolase I family. In terms of assembly, homomer.

It catalyses the reaction GTP + H2O = 7,8-dihydroneopterin 3'-triphosphate + formate + H(+). Its pathway is cofactor biosynthesis; 7,8-dihydroneopterin triphosphate biosynthesis; 7,8-dihydroneopterin triphosphate from GTP: step 1/1. This is GTP cyclohydrolase 1 from Chlorobium chlorochromatii (strain CaD3).